Here is a 968-residue protein sequence, read N- to C-terminus: uncharacterized protein (968 aa).

An N-terminal signal peptide occupies residues 1–27 (MHSWKKKLVVSQLALACTLAITSQANA). In terms of domain architecture, Autotransporter spans 703–968 (GLADNGGAWV…SANVGVKYTW (266 aa)).

This is an uncharacterized protein from Escherichia coli (strain K12).